Reading from the N-terminus, the 299-residue chain is ATP phosphoribosyltransferase (299 aa).

Belongs to the ATP phosphoribosyltransferase family. Long subfamily. Mg(2+) is required as a cofactor.

The protein resides in the cytoplasm. It carries out the reaction 1-(5-phospho-beta-D-ribosyl)-ATP + diphosphate = 5-phospho-alpha-D-ribose 1-diphosphate + ATP. It participates in amino-acid biosynthesis; L-histidine biosynthesis; L-histidine from 5-phospho-alpha-D-ribose 1-diphosphate: step 1/9. With respect to regulation, feedback inhibited by histidine. Its function is as follows. Catalyzes the condensation of ATP and 5-phosphoribose 1-diphosphate to form N'-(5'-phosphoribosyl)-ATP (PR-ATP). Has a crucial role in the pathway because the rate of histidine biosynthesis seems to be controlled primarily by regulation of HisG enzymatic activity. The sequence is that of ATP phosphoribosyltransferase from Shewanella frigidimarina (strain NCIMB 400).